We begin with the raw amino-acid sequence, 593 residues long: Aspartate--tRNA(Asp/Asn) ligase (593 aa).

Glutamate 172 lines the L-aspartate pocket. Residues glutamine 196 to lysine 199 are aspartate. Arginine 218 provides a ligand contact to L-aspartate. ATP-binding positions include arginine 218–glutamate 220 and glutamine 227. An L-aspartate-binding site is contributed by histidine 450. Glutamate 484 is an ATP binding site. Arginine 491 provides a ligand contact to L-aspartate. Glycine 536–arginine 539 is a binding site for ATP.

Belongs to the class-II aminoacyl-tRNA synthetase family. Type 1 subfamily. Homodimer.

The protein resides in the cytoplasm. The enzyme catalyses tRNA(Asx) + L-aspartate + ATP = L-aspartyl-tRNA(Asx) + AMP + diphosphate. Aspartyl-tRNA synthetase with relaxed tRNA specificity since it is able to aspartylate not only its cognate tRNA(Asp) but also tRNA(Asn). Reaction proceeds in two steps: L-aspartate is first activated by ATP to form Asp-AMP and then transferred to the acceptor end of tRNA(Asp/Asn). In Nitrosomonas europaea (strain ATCC 19718 / CIP 103999 / KCTC 2705 / NBRC 14298), this protein is Aspartate--tRNA(Asp/Asn) ligase.